The chain runs to 142 residues: Small ribosomal subunit protein bS6 (142 aa).

Over residues Asn-110–Glu-133 the composition is skewed to basic and acidic residues. The interval Asn-110–Glu-142 is disordered.

This sequence belongs to the bacterial ribosomal protein bS6 family.

In terms of biological role, binds together with bS18 to 16S ribosomal RNA. The sequence is that of Small ribosomal subunit protein bS6 from Helicobacter pylori (strain HPAG1).